Reading from the N-terminus, the 1072-residue chain is RIMS-binding protein 2 (1072 aa).

One can recognise an SH3 1 domain in the interval 181–248; sequence GKVHLCVARY…PSNFVDFIQD (68 aa). 3 Fibronectin type-III domains span residues 311-404, 407-489, and 503-604; these read VPYP…GKDV, APSQ…KKEA, and PPQD…VPPA. 2 disordered regions span residues 597 to 681 and 713 to 800; these read PDLL…APVS and SAGQ…TSHN. The span at 599–615 shows a compositional bias: pro residues; the sequence is LLVPPAPHPRTAPPPKP. Residues 620-635 are compositionally biased toward basic and acidic residues; that stretch reads MDTKDQHLGPHVKVDE. Positions 660–670 are enriched in low complexity; that stretch reads GPGRRSPSPSR. A phosphoserine mark is found at serine 720 and serine 728. 2 stretches are compositionally biased toward basic and acidic residues: residues 730–743 and 754–765; these read EVKR…DFLK and CHGDEYHTESSR. Residues 771–781 show a composition bias toward acidic residues; the sequence is DIMEEDEEELY. Residues serine 852 and serine 859 each carry the phosphoserine modification. Threonine 861 is modified (phosphothreonine). SH3 domains lie at 868-936 and 972-1039; these read LPAR…EIHA and VPTR…EVPD. Positions 1044-1072 are disordered; it reads HLSDAPPHYSHDPPMRSKAKRKKSVHFTP. Basic residues predominate over residues 1060–1072; that stretch reads SKAKRKKSVHFTP.

Belongs to the RIMBP family. As to quaternary structure, interacts with RIMS1, RIMS2, CACNA1D and CACNA1B, and potentially with other Ca(2+) channel alpha-1 isoforms.

The protein resides in the cell membrane. It localises to the synapse. Plays a role in the synaptic transmission as bifunctional linker that interacts simultaneously with RIMS1, RIMS2, CACNA1D and CACNA1B. This Mus musculus (Mouse) protein is RIMS-binding protein 2 (Rimbp2).